Reading from the N-terminus, the 176-residue chain is Interleukin-7 (176 aa).

An N-terminal signal peptide occupies residues 1 to 25 (MFHVSFRYIFGIPPLILVLLPVASS). 3 cysteine pairs are disulfide-bonded: C27-C165, C58-C153, and C71-C116. N-linked (GlcNAc...) asparagine glycans are attached at residues N94, N115, and N140. Residues 118–143 (SKGKGRKPPSLSEAQPTKNLEENKSS) form a disordered region.

It belongs to the IL-7/IL-9 family. As to quaternary structure, interacts with IL7R and CSF2RG.

The protein resides in the secreted. Hematopoietic cytokine that plays an essential role in the development, expansion, and survival of naive and memory T-cells and B-cells thereby regulating the number of mature lymphocytes and maintaining lymphoid homeostasis. Mechanistically, exerts its biological effects through a receptor composed of IL7RA subunit and the cytokine receptor common subunit gamma/CSF2RG. Binding to the receptor leads to activation of various kinases including JAK1 or JAK3 depending on the cell type and subsequently propagation of signals through activation of several downstream signaling pathways including the PI3K/Akt/mTOR or the JAK-STAT5. This chain is Interleukin-7 (IL7), found in Bos taurus (Bovine).